A 123-amino-acid chain; its full sequence is MIHSIGTDIVYIPRILRILQKYGEKFLNRIYTEKEIELSRKYNSQEMRARYFAKRFAAKEAFVKARGSGQGITMKDIEIYNDVRGKPYLTVSKDFISKIHLSLSDDGDYATAFVVICVYSSHR.

Aspartate 8 and glutamate 60 together coordinate Mg(2+).

The protein belongs to the P-Pant transferase superfamily. AcpS family. The cofactor is Mg(2+).

It localises to the cytoplasm. It carries out the reaction apo-[ACP] + CoA = holo-[ACP] + adenosine 3',5'-bisphosphate + H(+). Its function is as follows. Transfers the 4'-phosphopantetheine moiety from coenzyme A to a Ser of acyl-carrier-protein. The sequence is that of Holo-[acyl-carrier-protein] synthase from Wolbachia pipientis wMel.